Here is a 496-residue protein sequence, read N- to C-terminus: MAKSKIRVRYAPSPTGHLHIGNARTALFNYLFARHNKGKFILRIEDTDLKRNVKDGEKSQMDNLTWLGIDWDEGPDKGGDFGPYRQSERKSIYDPLIQQLIDEGKAYESYMTEDELSAQREAQKARKEMPHYVYEFAGMTEDEKQAKIAAAKAAGIQPVIRFHVPENTTYAWDDMVKGKVSFESKTVGGDFVIKKRDGMPTYNFAVVVDDHMMEISHVFRGDDHVANTPKQLMIYEAFGWQPPKFGHMSLIINTETGKKLSKRDETVLQFIEQYRELGYLPEAMLNFIILLGWSPVGESELFSKREFIKMYDEKRLSKSPAAFDGKKLEWVNNQYIKKADENEVFAMSIRQLIKAGRLPQRPDMSQIEWTRTLVSLFKNQMSYTGQIVDLADLFFNGPADINDEAKAELDNDTALPVLKEFRQRIEDIDVFEATAIQKTIKSIQKDTKIKGRALYMPIRIAVSHEMHGPELPETIELLGRETTKKHLDAMIAELAK.

Positions 12–22 match the 'HIGH' region motif; it reads PSPTGHLHIGN. Positions 259 to 263 match the 'KMSKS' region motif; sequence KLSKR. An ATP-binding site is contributed by K262.

It belongs to the class-I aminoacyl-tRNA synthetase family. Glutamate--tRNA ligase type 1 subfamily. In terms of assembly, monomer.

Its subcellular location is the cytoplasm. The catalysed reaction is tRNA(Glu) + L-glutamate + ATP = L-glutamyl-tRNA(Glu) + AMP + diphosphate. Functionally, catalyzes the attachment of glutamate to tRNA(Glu) in a two-step reaction: glutamate is first activated by ATP to form Glu-AMP and then transferred to the acceptor end of tRNA(Glu). This Lactiplantibacillus plantarum (strain ATCC BAA-793 / NCIMB 8826 / WCFS1) (Lactobacillus plantarum) protein is Glutamate--tRNA ligase.